A 321-amino-acid polypeptide reads, in one-letter code: Cytoskeleton protein RodZ (321 aa).

Topologically, residues 1–111 are cytoplasmic; that stretch reads MNTEATHDQN…LGKRRKKRDG (111 aa). The 53-residue stretch at 19-71 folds into the HTH cro/C1-type domain; the sequence is LRNAREQLGLSQQAVAERLCLKVSTVRDIEEDKAPSDLASTFLRGYIRSYARL. The H-T-H motif DNA-binding region spans 30-49; the sequence is QQAVAERLCLKVSTVRDIEE. The chain crosses the membrane as a helical; Signal-anchor for type II membrane protein span at residues 112-132; the sequence is WLMSFTWLVLFVVVGLTGAWW. Topologically, residues 133–321 are periplasmic; sequence WQNHKAQQEE…TINAEPTSAQ (189 aa). Positions 167–190 are disordered; that stretch reads DTRAAASQDTTPAETAPAAPVDST. Residues 176-190 show a composition bias toward low complexity; sequence TTPAETAPAAPVDST.

This sequence belongs to the RodZ family.

Its subcellular location is the cell inner membrane. In terms of biological role, cytoskeletal protein that is involved in cell-shape control through regulation of the length of the long axis. The sequence is that of Cytoskeleton protein RodZ from Salmonella arizonae (strain ATCC BAA-731 / CDC346-86 / RSK2980).